Here is a 188-residue protein sequence, read N- to C-terminus: Adenine phosphoribosyltransferase (188 aa).

This sequence belongs to the purine/pyrimidine phosphoribosyltransferase family. Homodimer.

The protein resides in the cytoplasm. The enzyme catalyses AMP + diphosphate = 5-phospho-alpha-D-ribose 1-diphosphate + adenine. Its pathway is purine metabolism; AMP biosynthesis via salvage pathway; AMP from adenine: step 1/1. Its function is as follows. Catalyzes a salvage reaction resulting in the formation of AMP, that is energically less costly than de novo synthesis. This is Adenine phosphoribosyltransferase from Burkholderia cenocepacia (strain HI2424).